The following is a 186-amino-acid chain: PRKR-interacting protein 1 (186 aa).

An interaction with EIF2AK2 region spans residues 1-50 (MASSAASSVRPPRPKKEPQALIIPKNAAEEQKLKLERLMKNPDKAVPIPE). Disordered stretches follow at residues 39-61 (MKNP…RPPP) and 119-186 (AAEE…ITGR). Residues 51 to 143 (KMSEWAPRPP…LKEKKLLAKK (93 aa)) are required for RNA-binding. Positions 86-153 (RRREYQRQDY…MKLEQKKQSE (68 aa)) form a coiled coil. The interval 126–138 (KRRKKRQKLKEKK) is required for nuclear localization. Residues 126-143 (KRRKKRQKLKEKKLLAKK) show a composition bias toward basic residues. The span at 153 to 162 (EASSETQEQP) shows a compositional bias: polar residues. A compositionally biased stretch (acidic residues) spans 170-179 (SGTEDEEEDA).

It belongs to the PRKRIP1 family. As to quaternary structure, component of the pre-catalytic and post-catalytic spliceosome complexes. Interacts with EIF2AK2.

It localises to the nucleus. It is found in the nucleolus. In terms of biological role, required for pre-mRNA splicing as component of the spliceosome. Binds double-stranded RNA. Inhibits EIF2AK2 kinase activity. This Bos taurus (Bovine) protein is PRKR-interacting protein 1 (PRKRIP1).